A 617-amino-acid chain; its full sequence is tRNA-dihydrouridine(47) synthase [NAD(P)(+)] (617 aa).

The C3H1-type zinc-finger motif lies at lysine 42–glutamate 70. The tract at residues glutamate 160–serine 193 is disordered. Residues proline 245–threonine 247 and glutamine 308 contribute to the FMN site. The active-site Proton donor is cysteine 340. Residues lysine 380, histidine 411, asparagine 460–aspartate 462, and alanine 483–arginine 484 each bind FMN.

This sequence belongs to the Dus family. Dus3 subfamily. It depends on FMN as a cofactor.

The protein localises to the cytoplasm. It is found in the nucleus. It catalyses the reaction 5,6-dihydrouridine(47) in tRNA + NAD(+) = uridine(47) in tRNA + NADH + H(+). It carries out the reaction 5,6-dihydrouridine(47) in tRNA + NADP(+) = uridine(47) in tRNA + NADPH + H(+). The catalysed reaction is a 5,6-dihydrouridine in mRNA + NAD(+) = a uridine in mRNA + NADH + H(+). The enzyme catalyses a 5,6-dihydrouridine in mRNA + NADP(+) = a uridine in mRNA + NADPH + H(+). In terms of biological role, catalyzes the synthesis of dihydrouridine, a modified base, in various RNAs, such as tRNAs and mRNAs. Modifies the uridine in position 47 (U47) in the D-loop of tRNAs. Also able to mediate formation of dihydrouridine outside of the D-loop of tRNAs. Catalyzes the synthesis of dihydrouridine in some mRNAs, thereby affecting their translation. Dus3-mediated dihydrouridylation of the mRNA encoding alpha-tubulin nda2 is required for meiotic chromosome segregation. The protein is tRNA-dihydrouridine(47) synthase [NAD(P)(+)] of Schizosaccharomyces pombe (strain 972 / ATCC 24843) (Fission yeast).